A 282-amino-acid chain; its full sequence is Glycine betaine/carnitine transport permease protein GbuB (282 aa).

Transmembrane regions (helical) follow at residues 44–64 (VFDLVPPWLFIILLVFGTFWV), 70–90 (KWGLIIFEVVGLLLIWNLDFW), 99–119 (LVLTSSLIALVIGVPLGIWMA), 140–160 (AFVYLIPAVAFFGIGMVPGVV), 220–240 (IMLALSMVVIASMIGAMGLGT), and 251–271 (AGGGFVAGIAIVIVAIILDRL). An ABC transmembrane type-1 domain is found at 93-272 (MTQTLTLVLT…IVAIILDRLT (180 aa)).

This sequence belongs to the binding-protein-dependent transport system permease family. As to quaternary structure, the complex is composed of two ATP-binding proteins (GbuA), two transmembrane proteins (GbuB) and a solute-binding protein (GbuC).

Its subcellular location is the cell membrane. With respect to regulation, the complex is activated by an osmotic gradient or by low temperature. Its function is as follows. Part of the ABC transporter complex GbuABC involved in glycine betaine uptake. Responsible for the translocation of the substrate across the membrane. Involved, with BetL and OpuC, in osmoprotection and cryoprotection of Listeria. Can also uptake carnitine when carnitine is abundant in the growth medium. The sequence is that of Glycine betaine/carnitine transport permease protein GbuB (gbuB) from Listeria monocytogenes serotype 1/2a (strain 10403S).